Consider the following 476-residue polypeptide: MSQATVEEKSKLRVIIVGGSVAGLTLAHCLAKANIDHIVLEKRAEISPQEGAFIGIWPNGARILDQLGLYDDFESLMPPVHRMNVRFPDGFTFSSFLPRTIQERFGYPIISIDRQKVLETLYERYPHKSNVLVNKKVMNVRLLGKGVSVVTEDGSAYNGDIVVGADGIHSRIRSEMWRLADENHPGLITSEDKQAFTVEYACVFGISEQLPSLRAGEHINSYSNGLCVITFHGEKGRIFWFLLVKLPKKTTYPNTPRFSAGDAASVCNNFATFRVSEDVCVSDLWMHKLCASMTALEEGILERWHYDRIVLLGDSVHKMTPNIGQGANTALEDASVLASLLNNLSKLSTEDGTSAYAMTKLLDEFQSTRYERAKNTHDKSRFGARLHTRDDMIKTLIGRYVFPYAGPRVLERSVKSLATAHSVEYLPFSKRLGPAWGEYSSRTKSTLGSTPIQMLTLLLPCLFYFMYSKLNLSLSS.

The FAD site is built by E41, G55, and R114. Y222 is an active-site residue. FAD contacts are provided by D314 and A327. N343 carries an N-linked (GlcNAc...) asparagine glycan. A helical transmembrane segment spans residues 447-467 (LGSTPIQMLTLLLPCLFYFMY). N471 carries an N-linked (GlcNAc...) asparagine glycan.

Belongs to the paxM FAD-dependent monooxygenase family. The cofactor is FAD.

Its subcellular location is the membrane. Its pathway is secondary metabolite biosynthesis; terpenoid biosynthesis. In terms of biological role, FAD-dependent monooxygenase; part of the gene cluster that mediates the biosynthesis of paraherquonin, a meroterpenoid with a unique, highly congested hexacyclic molecular architecture. The first step of the pathway is the synthesis of 3,5-dimethylorsellinic acid (DMOA) by the polyketide synthase prhL. Synthesis of DMOA is followed by farnesylation by the prenyltransferase prhE, methylesterification by the methyl-transferase prhM, epoxidation of the prenyl chain by the flavin-dependent monooxygenase prhF, and cyclization of the farnesyl moiety by the terpene cyclase prhH, to yield the tetracyclic intermediate, protoaustinoid A. The short chain dehydrogenase prhI then oxidizes the C-3 alcohol group of the terpene cyclase product to transform protoaustinoid A into protoaustinoid B. The FAD-binding monooxygenase prhJ catalyzes the oxidation of protoaustinoid B into preaustinoid A which is further oxidized into preaustinoid A1 by FAD-binding monooxygenase phrK. Finally, prhA leads to berkeleydione via the berkeleyone B intermediate. PrhA is a multifunctional dioxygenase that first desaturates at C5-C6 to form berkeleyone B, followed by rearrangement of the A/B-ring to form the cycloheptadiene moiety in berkeleydione. Berkeleydione serves as the key intermediate for the biosynthesis of paraherquonin as well as many other meroterpenoids. The cytochrome P450 monooxygenases prhB, prhD, and prhN, as well as the isomerase prhC, are probably involved in the late stage of paraherquonin biosynthesis, after the production of berkeleydione. Especially prhC might be a multifunctional enzyme that catalyzes the D-ring expansion via intramolecular methoxy rearrangement, as well as the hydrolysis of the expanded D-ring. The chain is FAD-dependent monooxygenase prhF from Penicillium brasilianum.